The following is a 121-amino-acid chain: Neuromedin-B (121 aa).

A signal peptide spans 1-24; the sequence is MTLRAVGVRLLGGLLLFALLAAGA. A Methionine amide modification is found at Met56. Positions 60-121 are excised as a propeptide; that stretch reads SLEPPSPSLL…RRLLVQTLQK (62 aa). The tract at residues 61 to 80 is disordered; sequence LEPPSPSLLGTAPHTSLRDQ.

The protein belongs to the bombesin/neuromedin-B/ranatensin family.

The protein localises to the secreted. It localises to the cell projection. It is found in the neuron projection. Functionally, stimulates smooth muscle contraction. Induces sighing by acting directly on the pre-Botzinger complex, a cluster of several thousand neurons in the ventrolateral medulla responsible for inspiration during respiratory activity. Contributes to the induction of sneezing following exposure to chemical irritants or allergens which causes release of NMB by nasal sensory neurons and activation of NMBR-expressing neurons in the sneeze-evoking region of the brainstem. These in turn activate neurons of the caudal ventral respiratory group, giving rise to the sneezing response. Contributes to induction of acute itch, possibly through activation of the NMBR receptor on dorsal root ganglion neurons. Increases expression of NMBR and steroidogenic mediators STAR, CYP11A1 and HSD3B1 in Leydig cells, induces secretion of testosterone by Leydig cells and also promotes Leydig cell proliferation. Plays a role in the innate immune response to influenza A virus infection by enhancing interferon alpha expression and reducing expression of IL6. Plays a role in CSF1-induced proliferation of osteoclast precursors by contributing to the positive regulation of the expression of the CSF1 receptor CSF1R. The protein is Neuromedin-B (NMB) of Bos taurus (Bovine).